The following is a 728-amino-acid chain: Polyphosphate kinase (728 aa).

Asn57 contacts ATP. Arg408 and Arg438 together coordinate Mg(2+). The active-site Phosphohistidine intermediate is the His468. Residues Tyr501, Arg597, and His625 each coordinate ATP. The disordered stretch occupies residues 694-728; sequence VQRRPASPEQSQSSQAIFTAQAIAETTEDPELRSV. Over residues 695–709 the composition is skewed to low complexity; that stretch reads QRRPASPEQSQSSQA.

This sequence belongs to the polyphosphate kinase 1 (PPK1) family. It depends on Mg(2+) as a cofactor. An intermediate of this reaction is the autophosphorylated ppk in which a phosphate is covalently linked to a histidine residue through a N-P bond.

It carries out the reaction [phosphate](n) + ATP = [phosphate](n+1) + ADP. In terms of biological role, catalyzes the reversible transfer of the terminal phosphate of ATP to form a long-chain polyphosphate (polyP). The polypeptide is Polyphosphate kinase (Synechocystis sp. (strain ATCC 27184 / PCC 6803 / Kazusa)).